The following is a 460-amino-acid chain: Adenosylhomocysteinase (460 aa).

Substrate is bound by residues threonine 83, aspartate 158, and glutamate 184. Position 185–187 (185–187 (TTT)) interacts with NAD(+). Positions 214 and 218 each coordinate substrate. NAD(+)-binding positions include asparagine 219, 248 to 253 (GYGDVG), glutamate 271, 327 to 329 (IGH), and asparagine 373.

The protein belongs to the adenosylhomocysteinase family. The cofactor is NAD(+).

The protein localises to the cytoplasm. The catalysed reaction is S-adenosyl-L-homocysteine + H2O = L-homocysteine + adenosine. It functions in the pathway amino-acid biosynthesis; L-homocysteine biosynthesis; L-homocysteine from S-adenosyl-L-homocysteine: step 1/1. In terms of biological role, may play a key role in the regulation of the intracellular concentration of adenosylhomocysteine. The chain is Adenosylhomocysteinase from Bdellovibrio bacteriovorus (strain ATCC 15356 / DSM 50701 / NCIMB 9529 / HD100).